A 314-amino-acid chain; its full sequence is Homoserine kinase (314 aa).

Position 97–107 (97–107 (PPARGMGSSAT)) interacts with ATP.

It belongs to the GHMP kinase family. Homoserine kinase subfamily.

It is found in the cytoplasm. The enzyme catalyses L-homoserine + ATP = O-phospho-L-homoserine + ADP + H(+). It participates in amino-acid biosynthesis; L-threonine biosynthesis; L-threonine from L-aspartate: step 4/5. Functionally, catalyzes the ATP-dependent phosphorylation of L-homoserine to L-homoserine phosphate. This chain is Homoserine kinase, found in Synechococcus sp. (strain RCC307).